The primary structure comprises 125 residues: UPF0763 protein NAMH_0545 (125 aa).

This sequence belongs to the UPF0763 family.

The polypeptide is UPF0763 protein NAMH_0545 (Nautilia profundicola (strain ATCC BAA-1463 / DSM 18972 / AmH)).